The chain runs to 158 residues: Ribosome maturation factor RimP (158 aa).

The protein belongs to the RimP family.

Its subcellular location is the cytoplasm. Its function is as follows. Required for maturation of 30S ribosomal subunits. The sequence is that of Ribosome maturation factor RimP from Lactobacillus delbrueckii subsp. bulgaricus (strain ATCC 11842 / DSM 20081 / BCRC 10696 / JCM 1002 / NBRC 13953 / NCIMB 11778 / NCTC 12712 / WDCM 00102 / Lb 14).